Here is a 411-residue protein sequence, read N- to C-terminus: Argininosuccinate synthase (411 aa).

Residues 13 to 21 (AYSGGLDTS) and Ala40 contribute to the ATP site. L-citrulline is bound by residues Tyr91 and Ser96. Gly121 lines the ATP pocket. L-aspartate-binding residues include Thr123, Asn127, and Asp128. Residue Asn127 participates in L-citrulline binding. L-citrulline contacts are provided by Arg131, Ser182, Ser191, Glu267, and Tyr279.

It belongs to the argininosuccinate synthase family. Type 1 subfamily. As to quaternary structure, homotetramer.

Its subcellular location is the cytoplasm. It carries out the reaction L-citrulline + L-aspartate + ATP = 2-(N(omega)-L-arginino)succinate + AMP + diphosphate + H(+). It participates in amino-acid biosynthesis; L-arginine biosynthesis; L-arginine from L-ornithine and carbamoyl phosphate: step 2/3. This Bartonella tribocorum (strain CIP 105476 / IBS 506) protein is Argininosuccinate synthase.